The sequence spans 400 residues: Homoserine O-acetyltransferase (400 aa).

The region spanning 64 to 373 (NAILICHALT…TDRGHDAFLL (310 aa)) is the AB hydrolase-1 domain. Serine 169 acts as the Nucleophile in catalysis. Arginine 239 contributes to the substrate binding site. Active-site residues include aspartate 335 and histidine 368. Aspartate 369 is a binding site for substrate.

The protein belongs to the AB hydrolase superfamily. MetX family. In terms of assembly, homodimer.

Its subcellular location is the cytoplasm. The catalysed reaction is L-homoserine + acetyl-CoA = O-acetyl-L-homoserine + CoA. It participates in amino-acid biosynthesis; L-methionine biosynthesis via de novo pathway; O-acetyl-L-homoserine from L-homoserine: step 1/1. In terms of biological role, transfers an acetyl group from acetyl-CoA to L-homoserine, forming acetyl-L-homoserine. In Bradyrhizobium diazoefficiens (strain JCM 10833 / BCRC 13528 / IAM 13628 / NBRC 14792 / USDA 110), this protein is Homoserine O-acetyltransferase.